The chain runs to 312 residues: Non-structural protein 12A (312 aa).

Residues 1–23 (MFKSGSGSLKRSGSISSVKSFSG) are compositionally biased toward low complexity. 3 disordered regions span residues 1–37 (MFKS…RGSV), 62–99 (FVPE…QNAD), and 111–161 (ESSK…GTGD). Residues 63–77 (VPEKTKSEGNLKDKS) are compositionally biased toward basic and acidic residues. Residues 78 to 98 (SVITGNFGSSGPINAHTNQNA) show a composition bias toward polar residues. Over residues 122–134 (DARHTATDSRLSQ) the composition is skewed to basic and acidic residues.

It belongs to the phytoreovirus non-structural protein Pns12A family.

Its subcellular location is the host cytoplasm. In terms of biological role, constituent of viral factories. Binds to ssRNA and dsRNA. This Alopecurus aequalis (Barnyard grass) protein is Non-structural protein 12A.